The chain runs to 1955 residues: Protocadherin-15 (1955 aa).

Positions 1–26 are cleaved as a signal peptide; the sequence is MFRQFYLWTCLASGIILGSLFEICLG. The Extracellular portion of the chain corresponds to 27-1376; the sequence is QYDDDCKLAR…GESLGYTEGA (1350 aa). C32 and C120 are disulfide-bonded. Cadherin domains lie at 40 to 147, 148 to 265, 278 to 395, 396 to 509, 510 to 616, 617 to 717, 719 to 819, 820 to 926, 927 to 1035, 1037 to 1144, and 1145 to 1259; these read PATI…SPTF, KHES…GPMF, RPLT…SPYF, TMPS…TPTF, PEIS…PPRF, PQLM…APVF, PYLP…SPVF, TNST…PPVF, SKRI…IPRF, QEEY…PPVF, and QKKF…PPTL. 3 N-linked (GlcNAc...) asparagine glycosylation sites follow: N52, N97, and N201. Residues N419, N559, N662, N724, N768, N821, and N851 are each glycosylated (N-linked (GlcNAc...) asparagine). 3 N-linked (GlcNAc...) asparagine glycosylation sites follow: N1064, N1084, and N1175. A helical membrane pass occupies residues 1377-1397; it reads LLALAFIIILCCIPAILVVLV. Over 1398 to 1955 the chain is Cytoplasmic; it reads SYRQFKVRQA…KQSHSQSTSL (558 aa). Positions 1426-1444 are enriched in pro residues; the sequence is VPAPAPVAAPPPPPPPPPG. Disordered stretches follow at residues 1426 to 1446, 1601 to 1623, 1745 to 1766, and 1928 to 1955; these read VPAPAPVAAPPPPPPPPPGAH, QGTRQKAENENTGICTNKRGSSN, CPLPPPPPISPPSPPPAPAPLA, and ITSEQNKGSLNNIVEGTEKQSHSQSTSL. Positions 1928–1941 are enriched in polar residues; the sequence is ITSEQNKGSLNNIV.

As to quaternary structure, antiparallel heterodimer with CDH23. Found in a complex with TMIE and LHFPL5. Interacts with LHFPL5/TMHS; this interaction is required for efficient localization to hair bundles. Interacts with MYO7A. Interacts with USH1G; this interaction may recruit USH1G to the plasma membrane. Interacts with TOMT. Isoforms CD1 and CD3 interact with TMC1 (via N-terminus) and TMC2 (via N-terminus). Expressed in brain, lung, kidney, spleen and testis. Found also in the inner and outer synaptic layers, and the nerve fiber layer in adult and fetal retinas. Found in the supporting cells, outer sulcus cells and spiral ganglion of fetal cochlea. Expressed in cytotoxic tumor-derived T- and NK-cell lines as well as biopsies of nasal NK/T-cell lymphomas. Not detected in normal or in vitro activated peripheral blood cells, CD4 or CD8 lymphocytes or NK cells. Isoform 3 is expressed in brain, heart, cerebellum and kidney. CD1 isoforms, such as isoform 1, have a limited pattern of expression and is detected in testis, retina and cochlea. CD2 isoforms, such as isoforms 4 and 5, are expressed in heart, kidney, thymus, spleen, testis, retina and cochlea. CD3 isoforms, such as isoform 6, are widely expressed.

The protein resides in the cell membrane. Its subcellular location is the secreted. Calcium-dependent cell-adhesion protein. Essential for maintenance of normal retinal and cochlear function. This Homo sapiens (Human) protein is Protocadherin-15 (PCDH15).